A 239-amino-acid polypeptide reads, in one-letter code: Fatty acid metabolism regulator protein (239 aa).

An HTH gntR-type domain is found at 6-74 (QSPAGFAEEY…HGKPTKVNNF (69 aa)). Positions 34–53 (ERELSELIGVTRTTLREVLQ) form a DNA-binding region, H-T-H motif.

As to quaternary structure, homodimer.

Its subcellular location is the cytoplasm. Its function is as follows. Multifunctional regulator of fatty acid metabolism. Represses transcription of at least eight genes required for fatty acid transport and beta-oxidation including fadA, fadB, fadD, fadL and fadE. Activates transcription of at least three genes required for unsaturated fatty acid biosynthesis: fabA, fabB and iclR, the gene encoding the transcriptional regulator of the aceBAK operon encoding the glyoxylate shunt enzymes. Binding of FadR is specifically inhibited by long chain fatty acyl-CoA compounds. This is Fatty acid metabolism regulator protein from Salmonella typhimurium (strain LT2 / SGSC1412 / ATCC 700720).